Consider the following 372-residue polypeptide: DNA replication and repair protein RecF (372 aa).

30-37 (GENAQGKT) is a binding site for ATP.

It belongs to the RecF family.

It is found in the cytoplasm. In terms of biological role, the RecF protein is involved in DNA metabolism; it is required for DNA replication and normal SOS inducibility. RecF binds preferentially to single-stranded, linear DNA. It also seems to bind ATP. The sequence is that of DNA replication and repair protein RecF from Geobacillus kaustophilus (strain HTA426).